The chain runs to 261 residues: Cell division protein DivIB (261 aa).

Residues 1–27 (MEKGKVVVLEDRVPKLKERRRQKANRR) are Cytoplasmic-facing. Residues 28–48 (LIAYLSFFFLFILCVLYFQSP) traverse the membrane as a helical segment. The tract at residues 47-117 (SPLGAVGHVE…PNTIAIHVRE (71 aa)) is alpha. Topologically, residues 49 to 261 (LGAVGHVEVS…KEDGDETTSP (213 aa)) are extracellular. The POTRA domain maps to 50–118 (GAVGHVEVSG…NTIAIHVREW (69 aa)). The tract at residues 118 to 230 (WRRIAYVYDR…YPAIAAALDR (113 aa)) is beta. Positions 231–260 (NVKGVIHLEVGSYFVPYSPPKKEDGDETTS) are gamma.

Belongs to the FtsQ/DivIB family. DivIB subfamily.

Its subcellular location is the cell membrane. Cell division protein that may be involved in stabilizing or promoting the assembly of the division complex. The chain is Cell division protein DivIB from Geobacillus kaustophilus (strain HTA426).